A 613-amino-acid polypeptide reads, in one-letter code: DBH-like monooxygenase protein 1 (613 aa).

The first 19 residues, 1–19, serve as a signal peptide directing secretion; sequence MCGWPLLVLWALLPATAAG. At 20–587 the chain is on the lumenal side; sequence SPGRSYPHRV…PLVCEKAASP (568 aa). Residues 35–148 form the DOMON domain; that stretch reads GKYWLHWGRQ…STVRVIWAYH (114 aa). Asn114 carries an N-linked (GlcNAc...) asparagine glycan. Residue Tyr203 is part of the active site. Intrachain disulfides connect Cys205-Cys257 and Cys242-Cys269. Positions 235 and 236 each coordinate Cu cation. A glycan (N-linked (GlcNAc...) asparagine) is linked at Asn247. His307, His389, His391, and Met464 together coordinate Cu cation. 3 disulfide bridges follow: Cys364–Cys480, Cys368–Cys550, and Cys443–Cys465. His389 is a catalytic residue. 2 N-linked (GlcNAc...) asparagine glycosylation sites follow: Asn476 and Asn517. A helical membrane pass occupies residues 588-608; the sequence is PLHGIFSLRLLTCALLLGSML.

This sequence belongs to the copper type II ascorbate-dependent monooxygenase family. It depends on Cu(2+) as a cofactor. Post-translationally, N-glycosylated. Broadly exprressed, with highest levels in salivary gland and ovary.

Its subcellular location is the endoplasmic reticulum membrane. This chain is DBH-like monooxygenase protein 1 (Moxd1), found in Mus musculus (Mouse).